Reading from the N-terminus, the 192-residue chain is Peptidyl-tRNA hydrolase (192 aa).

His-17 serves as a coordination point for tRNA. His-22 functions as the Proton acceptor in the catalytic mechanism. The tRNA site is built by Phe-68, Asn-70, and Asn-116.

Belongs to the PTH family. As to quaternary structure, monomer.

It localises to the cytoplasm. It carries out the reaction an N-acyl-L-alpha-aminoacyl-tRNA + H2O = an N-acyl-L-amino acid + a tRNA + H(+). Hydrolyzes ribosome-free peptidyl-tRNAs (with 1 or more amino acids incorporated), which drop off the ribosome during protein synthesis, or as a result of ribosome stalling. In terms of biological role, catalyzes the release of premature peptidyl moieties from peptidyl-tRNA molecules trapped in stalled 50S ribosomal subunits, and thus maintains levels of free tRNAs and 50S ribosomes. This is Peptidyl-tRNA hydrolase from Xylella fastidiosa (strain 9a5c).